The primary structure comprises 180 residues: uncharacterized protein (180 aa).

The disordered stretch occupies residues 1-93 (MPSSVPKTSI…LPRRRNPGWV (93 aa)). Composition is skewed to low complexity over residues 9-25 (SIES…SQAS) and 47-64 (LTSS…SSSQ).

This is an uncharacterized protein from Homo sapiens (Human).